Here is a 435-residue protein sequence, read N- to C-terminus: 3-phosphoshikimate 1-carboxyvinyltransferase (435 aa).

3-phosphoshikimate is bound by residues K22, S23, and R27. A phosphoenolpyruvate-binding site is contributed by K22. 2 residues coordinate phosphoenolpyruvate: G94 and R122. The 3-phosphoshikimate site is built by S166, Q168, D314, and K341. Residue Q168 participates in phosphoenolpyruvate binding. Residue D314 is the Proton acceptor of the active site. 2 residues coordinate phosphoenolpyruvate: R345 and R388.

Belongs to the EPSP synthase family. In terms of assembly, monomer.

The protein localises to the cytoplasm. The enzyme catalyses 3-phosphoshikimate + phosphoenolpyruvate = 5-O-(1-carboxyvinyl)-3-phosphoshikimate + phosphate. Its pathway is metabolic intermediate biosynthesis; chorismate biosynthesis; chorismate from D-erythrose 4-phosphate and phosphoenolpyruvate: step 6/7. Its function is as follows. Catalyzes the transfer of the enolpyruvyl moiety of phosphoenolpyruvate (PEP) to the 5-hydroxyl of shikimate-3-phosphate (S3P) to produce enolpyruvyl shikimate-3-phosphate and inorganic phosphate. In Ruthia magnifica subsp. Calyptogena magnifica, this protein is 3-phosphoshikimate 1-carboxyvinyltransferase.